The sequence spans 566 residues: Putative ABC transporter ATP-binding protein BCE_2668 (566 aa).

ABC transporter domains follow at residues 5 to 246 and 300 to 533; these read ISFE…GLRE and LKVE…ANLK. Residues 39 to 46 and 333 to 340 contribute to the ATP site; these read GRSGSGKS and GHNGAGKS.

This sequence belongs to the ABC transporter superfamily.

It localises to the cell membrane. Probably part of an ABC transporter complex. Responsible for energy coupling to the transport system. The sequence is that of Putative ABC transporter ATP-binding protein BCE_2668 from Bacillus cereus (strain ATCC 10987 / NRS 248).